Consider the following 538-residue polypeptide: Chaperonin GroEL 2 (538 aa).

ATP contacts are provided by residues 29–32, 86–90, G412, 479–481, and D495; these read TLGP, DGTTT, and NAA.

It belongs to the chaperonin (HSP60) family. Forms a cylinder of 14 subunits composed of two heptameric rings stacked back-to-back. Interacts with the co-chaperonin GroES.

Its subcellular location is the cytoplasm. The enzyme catalyses ATP + H2O + a folded polypeptide = ADP + phosphate + an unfolded polypeptide.. In terms of biological role, together with its co-chaperonin GroES, plays an essential role in assisting protein folding. The GroEL-GroES system forms a nano-cage that allows encapsulation of the non-native substrate proteins and provides a physical environment optimized to promote and accelerate protein folding. This is Chaperonin GroEL 2 from Renibacterium salmoninarum (strain ATCC 33209 / DSM 20767 / JCM 11484 / NBRC 15589 / NCIMB 2235).